The following is a 463-amino-acid chain: ATP-dependent protease ATPase subunit HslU (463 aa).

ATP-binding positions include Ile-19, 61–66, Asp-277, Glu-341, and Arg-413; that span reads GVGKTE.

This sequence belongs to the ClpX chaperone family. HslU subfamily. As to quaternary structure, a double ring-shaped homohexamer of HslV is capped on each side by a ring-shaped HslU homohexamer. The assembly of the HslU/HslV complex is dependent on binding of ATP.

It is found in the cytoplasm. Functionally, ATPase subunit of a proteasome-like degradation complex; this subunit has chaperone activity. The binding of ATP and its subsequent hydrolysis by HslU are essential for unfolding of protein substrates subsequently hydrolyzed by HslV. HslU recognizes the N-terminal part of its protein substrates and unfolds these before they are guided to HslV for hydrolysis. The sequence is that of ATP-dependent protease ATPase subunit HslU from Bacillus anthracis (strain A0248).